Reading from the N-terminus, the 124-residue chain is Large ribosomal subunit protein bL36m (124 aa).

This sequence belongs to the bacterial ribosomal protein bL36 family. As to quaternary structure, component of the mitochondrial large ribosomal subunit (mt-LSU). Mature N.crassa 74S mitochondrial ribosomes consist of a small (37S) and a large (54S) subunit. The 37S small subunit contains a 16S ribosomal RNA (16S mt-rRNA) and 32 different proteins. The 54S large subunit contains a 23S rRNA (23S mt-rRNA) and 42 different proteins. bL36m has a zinc binding site.

Its subcellular location is the mitochondrion. Component of the mitochondrial ribosome (mitoribosome), a dedicated translation machinery responsible for the synthesis of mitochondrial genome-encoded proteins, including at least some of the essential transmembrane subunits of the mitochondrial respiratory chain. The mitoribosomes are attached to the mitochondrial inner membrane and translation products are cotranslationally integrated into the membrane. The polypeptide is Large ribosomal subunit protein bL36m (rtc6) (Neurospora crassa (strain ATCC 24698 / 74-OR23-1A / CBS 708.71 / DSM 1257 / FGSC 987)).